Consider the following 454-residue polypeptide: MGSSQSVEIPGGGTEGYHVLRVQENSPGHRAGLEPFFDFIVSISGSRLNKDNDTLKDLLKANVEKPVKMLIYSSKTLELREASVTPSNLWGGQGLLGVSIRFCSFDGANENVWHVLEVESNSPAALAGLRPHSDYIIGADTVMNESEDLFSLIETHEAKPLKLYVYNTDTDNCREVIITPNSAWGGEGSLGCGIGYGYLHRIPTRPFEEGKKISLPGQMTGTPITPLKDGFTQVQLSSVSPPSLSPPGTAGVEQSLSGLSISSAPPAVSNVLSTGVPTVPLLPPQVNQSLASVPPMNPAATLPSLMPLSAGLPNLPNLPSLSNFNLPAPHIMPGVGLPELGKPGLPPLPSLPPRNVPGIAPLPMPSDFLPSFPLVPEGSSAASAGEPLSSLPAMGPPSDPVMTTAKADTSSLTVDVMSPASKVPTTVEDRVSDCTPAMEKPVSAVTDANASGAS.

Gly2 carries the N-myristoyl glycine lipid modification. 2 PDZ GRASP-type domains span residues 15–105 (EGYH…FCSF) and 111–199 (NVWH…YGYL). Residues 15 to 215 (EGYHVLRVQE…PFEEGKKISL (201 aa)) form a GRASP region. Dimethylated arginine is present on residues Arg30 and Arg47. The tract at residues 194–199 (IGYGYL) is important for membrane binding. At Ser214 the chain carries Phosphoserine. Thr222 carries the post-translational modification Phosphothreonine. The residue at position 225 (Thr225) is a Phosphothreonine; by MAPK. A disordered region spans residues 377 to 454 (EGSSAASAGE…VTDANASGAS (78 aa)). Ser411 is modified (phosphoserine). Thr435 carries the phosphothreonine modification. Phosphoserine occurs at positions 443 and 451.

Belongs to the GORASP family. Homodimer. Homooligomer. ER stress induces phosphorylation-dependent monomerization. Interacts with BLZF1/Golgin 45. Identified in a complex with RAB2 and GORASP2. Interacts with JAM2 and JAM3. Interacts with members of the p24 cargo receptors. Interacts with CNIH1 and the cytoplasmic domain of transmembrane TGFA, prior its transit in the trans-Golgi. Interacts with KCTD5. Interacts with TMED2 and TMED3. Interacts with SEC16A in response to ER stress. Interacts (via PDZ GRASP-type 1 domain) with core-glycosylated CFTR in response to ER stress. In terms of processing, myristoylated. Myristoylation is essential for the Golgi targeting. Post-translationally, palmitoylated. Phosphorylated in mitotic cells. ER stress-induced phosphorylation at Ser-443 induces monomerization and subsequent relocalization from Golgi to ER which is essential for mediating unconventional (ER/Golgi-independent) trafficking of CFTR to the cell membrane. As to expression, detected in lung, brain, heart, liver and testis.

It is found in the golgi apparatus membrane. The protein localises to the endoplasmic reticulum membrane. It localises to the golgi apparatus. Key structural protein of the Golgi apparatus. The membrane cisternae of the Golgi apparatus adhere to each other to form stacks, which are aligned side by side to form the Golgi ribbon. Acting in concert with GORASP1/GRASP65, is required for the formation and maintenance of the Golgi ribbon, and may be dispensable for the formation of stacks. However, other studies suggest that GORASP2 plays a role in the assembly and membrane stacking of the Golgi cisternae, and in the process by which Golgi stacks reform after breakdown during mitosis and meiosis. May regulate the intracellular transport and presentation of a defined set of transmembrane proteins, such as transmembrane TGFA. Required for normal acrosome formation during spermiogenesis and normal male fertility, probably by promoting colocalization of JAM2 and JAM3 at contact sites between germ cells and Sertoli cells. Mediates ER stress-induced unconventional (ER/Golgi-independent) trafficking of core-glycosylated CFTR to cell membrane. The chain is Golgi reassembly-stacking protein 2 (Gorasp2) from Rattus norvegicus (Rat).